Reading from the N-terminus, the 262-residue chain is Global transcriptional regulator CodY (262 aa).

The interval 1 to 159 (MATLLEKTRK…ATTVIGVQLS (159 aa)) is GAF domain. The segment at residues 207–226 (ASVIADKIGITRSVIVNALR) is a DNA-binding region (H-T-H motif).

The protein belongs to the CodY family.

The protein resides in the cytoplasm. Functionally, DNA-binding global transcriptional regulator which is involved in the adaptive response to starvation and acts by directly or indirectly controlling the expression of numerous genes in response to nutrient availability. During rapid exponential growth, CodY is highly active and represses genes whose products allow adaptation to nutrient depletion. The protein is Global transcriptional regulator CodY of Lactococcus lactis subsp. lactis (strain IL1403) (Streptococcus lactis).